A 127-amino-acid polypeptide reads, in one-letter code: Aspartate 1-decarboxylase (127 aa).

The active-site Schiff-base intermediate with substrate; via pyruvic acid is Ser-25. Residue Ser-25 is modified to Pyruvic acid (Ser). Substrate is bound at residue Thr-57. The active-site Proton donor is Tyr-58. Residue 73 to 75 (GAA) coordinates substrate.

The protein belongs to the PanD family. In terms of assembly, heterooctamer of four alpha and four beta subunits. Pyruvate is required as a cofactor. In terms of processing, is synthesized initially as an inactive proenzyme, which is activated by self-cleavage at a specific serine bond to produce a beta-subunit with a hydroxyl group at its C-terminus and an alpha-subunit with a pyruvoyl group at its N-terminus.

It is found in the cytoplasm. The catalysed reaction is L-aspartate + H(+) = beta-alanine + CO2. It functions in the pathway cofactor biosynthesis; (R)-pantothenate biosynthesis; beta-alanine from L-aspartate: step 1/1. Its function is as follows. Catalyzes the pyruvoyl-dependent decarboxylation of aspartate to produce beta-alanine. The polypeptide is Aspartate 1-decarboxylase (Bacillus cereus (strain ATCC 10987 / NRS 248)).